A 78-amino-acid chain; its full sequence is Defensin-like protein (78 aa).

Residues 1 to 31 (MGRSIRLFATFFLIAMLFLSTEMGPMTSAEA) form the signal peptide. Cystine bridges form between Cys34–Cys78, Cys45–Cys65, Cys51–Cys72, and Cys55–Cys74.

This sequence belongs to the DEFL family. Predominantly expressed in the pistil during all stages of flower development.

Its subcellular location is the secreted. May be involved in the defense of the pistil against pathogen infection. This is Defensin-like protein from Petunia integrifolia (Violet-flowered petunia).